The sequence spans 375 residues: Ribosomal RNA large subunit methyltransferase G (375 aa).

It belongs to the methyltransferase superfamily. RlmG family.

It localises to the cytoplasm. It catalyses the reaction guanosine(1835) in 23S rRNA + S-adenosyl-L-methionine = N(2)-methylguanosine(1835) in 23S rRNA + S-adenosyl-L-homocysteine + H(+). In terms of biological role, specifically methylates the guanine in position 1835 (m2G1835) of 23S rRNA. This Erwinia tasmaniensis (strain DSM 17950 / CFBP 7177 / CIP 109463 / NCPPB 4357 / Et1/99) protein is Ribosomal RNA large subunit methyltransferase G.